The chain runs to 141 residues: HTH-type transcriptional repressor NsrR (141 aa).

Positions glutamine 2–lysine 129 constitute an HTH rrf2-type domain. The H-T-H motif DNA-binding region spans isoleucine 28–arginine 51. Residues cysteine 91, cysteine 96, and cysteine 102 each coordinate [2Fe-2S] cluster.

It depends on [2Fe-2S] cluster as a cofactor.

Functionally, nitric oxide-sensitive repressor of genes involved in protecting the cell against nitrosative stress. May require iron for activity. In Yersinia pseudotuberculosis serotype O:1b (strain IP 31758), this protein is HTH-type transcriptional repressor NsrR.